The primary structure comprises 199 residues: uncharacterized protein (199 aa).

Residues Pro112 to Lys160 form the G-patch domain.

This is an uncharacterized protein from Schizosaccharomyces pombe (strain 972 / ATCC 24843) (Fission yeast).